Reading from the N-terminus, the 345-residue chain is Phosphate acyltransferase (345 aa).

This sequence belongs to the PlsX family. Homodimer. Probably interacts with PlsY.

Its subcellular location is the cytoplasm. It catalyses the reaction a fatty acyl-[ACP] + phosphate = an acyl phosphate + holo-[ACP]. It participates in lipid metabolism; phospholipid metabolism. In terms of biological role, catalyzes the reversible formation of acyl-phosphate (acyl-PO(4)) from acyl-[acyl-carrier-protein] (acyl-ACP). This enzyme utilizes acyl-ACP as fatty acyl donor, but not acyl-CoA. The polypeptide is Phosphate acyltransferase (Wolbachia sp. subsp. Drosophila simulans (strain wRi)).